Here is a 124-residue protein sequence, read N- to C-terminus: Small ribosomal subunit protein eS6 (124 aa).

It belongs to the eukaryotic ribosomal protein eS6 family.

This chain is Small ribosomal subunit protein eS6, found in Thermoplasma acidophilum (strain ATCC 25905 / DSM 1728 / JCM 9062 / NBRC 15155 / AMRC-C165).